The chain runs to 89 residues: Small ribosomal subunit protein uS15 (89 aa).

This sequence belongs to the universal ribosomal protein uS15 family. As to quaternary structure, part of the 30S ribosomal subunit. Forms a bridge to the 50S subunit in the 70S ribosome, contacting the 23S rRNA.

One of the primary rRNA binding proteins, it binds directly to 16S rRNA where it helps nucleate assembly of the platform of the 30S subunit by binding and bridging several RNA helices of the 16S rRNA. Its function is as follows. Forms an intersubunit bridge (bridge B4) with the 23S rRNA of the 50S subunit in the ribosome. The polypeptide is Small ribosomal subunit protein uS15 (Bifidobacterium animalis subsp. lactis (strain AD011)).